The following is a 307-amino-acid chain: Upstream stimulatory factor 1 (307 aa).

Disordered regions lie at residues 104 to 131 (DDNGETDASGPETHYTYFPTDSSTSVGG) and 168 to 207 (QGGSQRSIAPRTHPYSPKSDGPRTTRDDKRRAQHNEVERR). A compositionally biased stretch (low complexity) spans 122–131 (PTDSSTSVGG). Basic and acidic residues predominate over residues 187–207 (DGPRTTRDDKRRAQHNEVERR). The bHLH domain maps to 196–251 (KRRAQHNEVERRRRDKINNWIVQLSKIIPDCSMESTKTGQSKGGILSKACDYIQEL). Residues 268 to 289 (LQMDNEVLRQQVEDLKNNNLTL) form a leucine-zipper region.

As to quaternary structure, efficient DNA binding requires dimerization with another bHLH protein. Binds DNA as a homodimer or a heterodimer. In terms of tissue distribution, oocyte and somatic tissue. Oocytic and somatic forms of this protein exist, probably as a result of post-translational modifications or minor splicing differences.

Its subcellular location is the nucleus. Its function is as follows. May act as a regulator of transcription factor IIIA (TFIIIA) gene expression. This Xenopus borealis (Kenyan clawed frog) protein is Upstream stimulatory factor 1 (usf1).